The sequence spans 450 residues: Sorting nexin-4 (450 aa).

The residue at position 1 (Met-1) is an N-acetylmethionine. Positions 1-46 (MEQAPPDPEKLLQPGPLEPLGGPGAVLEAAVGEENEGTREDGSGVD) are disordered. The span at 11–20 (LLQPGPLEPL) shows a compositional bias: low complexity. A PX domain is found at 61 to 187 (SVSEAEKRTG…YSFLTQEGNW (127 aa)). Arg-106, Ser-108, Lys-132, and Arg-154 together coordinate a 1,2-diacyl-sn-glycero-3-phospho-(1D-myo-inositol-3-phosphate).

This sequence belongs to the sorting nexin family. Heterodimer; heterodimerizes with SNX7 or SNX30. Interacts with WWC1/KIBRA. Identified in a complex with WWC1/KIBRA and dynein components DYNLL1 and DYNC1I2. Interacts with BIN1.

The protein localises to the early endosome. It localises to the early endosome membrane. In terms of biological role, involved in the regulation of endocytosis and in several stages of intracellular trafficking. Plays a role in recycling endocytosed transferrin receptor and prevent its degradation. Involved in autophagosome assembly by regulating trafficking and recycling of phospholipid scramblase ATG9A. The sequence is that of Sorting nexin-4 from Mus musculus (Mouse).